Here is a 173-residue protein sequence, read N- to C-terminus: Co-chaperone protein HscB homolog (173 aa).

One can recognise a J domain in the interval 5 to 77; the sequence is CHYALFDLQP…PRRARYLLAI (73 aa).

Belongs to the HscB family. As to quaternary structure, interacts with HscA and stimulates its ATPase activity.

Its function is as follows. Co-chaperone involved in the maturation of iron-sulfur cluster-containing proteins. Seems to help targeting proteins to be folded toward HscA. This chain is Co-chaperone protein HscB homolog, found in Pseudomonas putida (strain ATCC 700007 / DSM 6899 / JCM 31910 / BCRC 17059 / LMG 24140 / F1).